A 131-amino-acid polypeptide reads, in one-letter code: Histone H2A type 1-A (131 aa).

The interval Met1–Gly23 is disordered. The residue at position 2 (Ser2) is an N-acetylserine. Ser2 is subject to Phosphoserine; by RPS6KA5. The residue at position 4 (Arg4) is a Citrulline; alternate. Arg4 is subject to Symmetric dimethylarginine; by PRMT5; alternate. Position 6 is an N6-(2-hydroxyisobutyryl)lysine (Lys6). A compositionally biased stretch (basic residues) spans Gln7–Ser19. At Lys10 the chain carries N6-(2-hydroxyisobutyryl)lysine; alternate. The residue at position 10 (Lys10) is an N6-(beta-hydroxybutyryl)lysine; alternate. N6-lactoyllysine; alternate is present on Lys10. Position 10 is an N6-succinyllysine; alternate (Lys10). Lys14 carries the post-translational modification N6-(beta-hydroxybutyryl)lysine. Residues Lys14 and Lys16 each participate in a glycyl lysine isopeptide (Lys-Gly) (interchain with G-Cter in ubiquitin) cross-link. At Lys37 the chain carries N6-(2-hydroxyisobutyryl)lysine; alternate. At Lys37 the chain carries N6-(beta-hydroxybutyryl)lysine; alternate. Position 37 is an N6-crotonyllysine; alternate (Lys37). 2 positions are modified to N6-(2-hydroxyisobutyryl)lysine: Lys75 and Lys76. Lys96 bears the N6-(2-hydroxyisobutyryl)lysine; alternate mark. Lys96 is modified (N6-(beta-hydroxybutyryl)lysine; alternate). The residue at position 96 (Lys96) is an N6-succinyllysine; alternate. Lys96 bears the N6-glutaryllysine; alternate mark. Gln105 bears the N5-methylglutamine mark. Lys119 is modified (N6-(2-hydroxyisobutyryl)lysine; alternate). At Lys119 the chain carries N6-(beta-hydroxybutyryl)lysine; alternate. Residues Lys119 and Lys120 each carry the N6-crotonyllysine; alternate modification. An N6-glutaryllysine; alternate mark is found at Lys119 and Lys120. A Glycyl lysine isopeptide (Lys-Gly) (interchain with G-Cter in ubiquitin); alternate cross-link involves residue Lys120. Residue Thr121 is modified to Phosphothreonine; by DCAF1. Lys127 is modified (N6-crotonyllysine).

Belongs to the histone H2A family. The nucleosome is a histone octamer containing two molecules each of H2A, H2B, H3 and H4 assembled in one H3-H4 heterotetramer and two H2A-H2B heterodimers. The octamer wraps approximately 147 bp of DNA. Deiminated on Arg-4 in granulocytes upon calcium entry. Post-translationally, monoubiquitination of Lys-120 (H2AK119Ub) by RING1, TRIM37 and RNF2/RING2 complex gives a specific tag for epigenetic transcriptional repression and participates in X chromosome inactivation of female mammals. It is involved in the initiation of both imprinted and random X inactivation. Ubiquitinated H2A is enriched in inactive X chromosome chromatin. Ubiquitination of H2A functions downstream of methylation of 'Lys-27' of histone H3 (H3K27me). H2AK119Ub by RNF2/RING2 can also be induced by ultraviolet and may be involved in DNA repair. Monoubiquitination of Lys-120 (H2AK119Ub) by TRIM37 may promote transformation of cells in a number of breast cancers. Following DNA double-strand breaks (DSBs), it is ubiquitinated through 'Lys-63' linkage of ubiquitin moieties by the E2 ligase UBE2N and the E3 ligases RNF8 and RNF168, leading to the recruitment of repair proteins to sites of DNA damage. Ubiquitination at Lys-14 and Lys-16 (H2AK13Ub and H2AK15Ub, respectively) in response to DNA damage is initiated by RNF168 that mediates monoubiquitination at these 2 sites, and 'Lys-63'-linked ubiquitin are then conjugated to monoubiquitin; RNF8 is able to extend 'Lys-63'-linked ubiquitin chains in vitro. Deubiquitinated by USP51 at Lys-14 and Lys-16 (H2AK13Ub and H2AK15Ub, respectively) after damaged DNA is repaired. H2AK119Ub and ionizing radiation-induced 'Lys-63'-linked ubiquitination (H2AK13Ub and H2AK15Ub) are distinct events. In terms of processing, phosphorylation on Ser-2 (H2AS1ph) is enhanced during mitosis. Phosphorylation on Ser-2 by RPS6KA5/MSK1 directly represses transcription. Acetylation of H3 inhibits Ser-2 phosphorylation by RPS6KA5/MSK1. Phosphorylation at Thr-121 (H2AT120ph) by DCAF1 is present in the regulatory region of many tumor suppresor genes and down-regulates their transcription. Glutamine methylation at Gln-105 (H2AQ104me) by FBL is specifically dedicated to polymerase I. It is present at 35S ribosomal DNA locus and impairs binding of the FACT complex. Post-translationally, symmetric dimethylation on Arg-4 by the PRDM1/PRMT5 complex may play a crucial role in the germ-cell lineage. In terms of processing, crotonylation (Kcr) is specifically present in male germ cells and marks testis-specific genes in post-meiotic cells, including X-linked genes that escape sex chromosome inactivation in haploid cells. Crotonylation marks active promoters and enhancers and confers resistance to transcriptional repressors. It is also associated with post-meiotically activated genes on autosomes. Lactylated in macrophages by EP300/P300 by using lactoyl-CoA directly derived from endogenous or exogenous lactate, leading to stimulates gene transcription.

The protein resides in the nucleus. The protein localises to the chromosome. Functionally, core component of nucleosome. Nucleosomes wrap and compact DNA into chromatin, limiting DNA accessibility to the cellular machineries which require DNA as a template. Histones thereby play a central role in transcription regulation, DNA repair, DNA replication and chromosomal stability. DNA accessibility is regulated via a complex set of post-translational modifications of histones, also called histone code, and nucleosome remodeling. This chain is Histone H2A type 1-A, found in Homo sapiens (Human).